A 630-amino-acid polypeptide reads, in one-letter code: Threonine--tRNA ligase (630 aa).

The segment at 1–137 is editing domain; the sequence is MKVLLIHSDY…PLSELSRKIT (137 aa). Positions 207-506 are catalytic; sequence PHVKFITEKE…ADAGAPPMLP (300 aa). Residues Cys299, His351, and His475 each contribute to the Zn(2+) site.

The protein belongs to the class-II aminoacyl-tRNA synthetase family. In terms of assembly, homodimer. It depends on Zn(2+) as a cofactor.

It is found in the cytoplasm. It carries out the reaction tRNA(Thr) + L-threonine + ATP = L-threonyl-tRNA(Thr) + AMP + diphosphate + H(+). Functionally, catalyzes the attachment of threonine to tRNA(Thr) in a two-step reaction: L-threonine is first activated by ATP to form Thr-AMP and then transferred to the acceptor end of tRNA(Thr). Also edits incorrectly charged L-seryl-tRNA(Thr). This Methanococcus aeolicus (strain ATCC BAA-1280 / DSM 17508 / OCM 812 / Nankai-3) protein is Threonine--tRNA ligase.